The chain runs to 344 residues: 4-dimethylallyltryptophan N-methyltransferase easF (344 aa).

This sequence belongs to the methyltransferase superfamily. As to quaternary structure, homodimer.

The enzyme catalyses 4-(3-methylbut-2-enyl)-L-tryptophan + S-adenosyl-L-methionine = 4-(3-methylbut-2-enyl)-L-abrine + S-adenosyl-L-homocysteine + H(+). It functions in the pathway alkaloid biosynthesis; ergot alkaloid biosynthesis. Its function is as follows. 4-dimethylallyltryptophan N-methyltransferase; part of the gene cluster that mediates the biosynthesis of fungal ergot alkaloid. DmaW catalyzes the first step of ergot alkaloid biosynthesis by condensing dimethylallyl diphosphate (DMAP) and tryptophan to form 4-dimethylallyl-L-tryptophan. The second step is catalyzed by the methyltransferase easF that methylates 4-dimethylallyl-L-tryptophan in the presence of S-adenosyl-L-methionine, resulting in the formation of 4-dimethylallyl-L-abrine. The catalase easC and the FAD-dependent oxidoreductase easE then transform 4-dimethylallyl-L-abrine to chanoclavine-I which is further oxidized by easD in the presence of NAD(+), resulting in the formation of chanoclavine-I aldehyde. Agroclavine dehydrogenase easG then mediates the conversion of chanoclavine-I aldehyde to agroclavine via a non-enzymatic adduct reaction: the substrate is an iminium intermediate that is formed spontaneously from chanoclavine-I aldehyde in the presence of glutathione. The presence of easA is not required to complete this reaction. Further conversion of agroclavine to paspalic acid is a two-step process involving oxidation of agroclavine to elymoclavine and of elymoclavine to paspalic acid, the second step being performed by the elymoclavine oxidase cloA. Paspalic acid is then further converted to D-lysergic acid. Ergopeptines are assembled from D-lysergic acid and three different amino acids by the D-lysergyl-peptide-synthetases composed each of a monomudular and a trimodular nonribosomal peptide synthetase subunit. LpsB and lpsC encode the monomodular subunits responsible for D-lysergic acid activation and incorporation into the ergopeptine backbone. LpsA1 and A2 subunits encode the trimodular nonribosomal peptide synthetase assembling the tripeptide portion of ergopeptines. LpsA1 is responsible for formation of the major ergopeptine, ergotamine, and lpsA2 for alpha-ergocryptine, the minor ergopeptine of the total alkaloid mixture elaborated by C.purpurea. D-lysergyl-tripeptides are assembled by the nonribosomal peptide synthetases and released as N-(D-lysergyl-aminoacyl)-lactams. Cyclolization of the D-lysergyl-tripeptides is performed by the Fe(2+)/2-ketoglutarate-dependent dioxygenase easH which introduces a hydroxyl group into N-(D-lysergyl-aminoacyl)-lactam at alpha-C of the aminoacyl residue followed by spontaneous condensation with the terminal lactam carbonyl group. This Claviceps purpurea (Ergot fungus) protein is 4-dimethylallyltryptophan N-methyltransferase easF.